The primary structure comprises 341 residues: D-aspartate oxidase (341 aa).

Positions 36, 37, 43, 44, 50, 307, 311, and 312 each coordinate FAD. The Microbody targeting signal signature appears at 339–341; it reads SKL.

Belongs to the DAMOX/DASOX family. In terms of assembly, tetramer. Interacts with PEX5; the interaction is direct and required for localization of DDO to the peroxisome. FAD serves as cofactor. As to expression, expressed in liver and kidney (at protein level). In the brain, expressed in the frontal, temporal, and occipital lobes of the cortex, hippocampus, striatum, diencephalon, brainstem, cerebellum, spinal cord, plexus choroiderus and ependyma (at protein level). Also expressed in the lung, muscle, heart, spleen, small intestine and testis (at protein level).

The protein localises to the peroxisome matrix. The protein resides in the cytoplasm. Its subcellular location is the cytosol. It catalyses the reaction D-aspartate + O2 + H2O = oxaloacetate + H2O2 + NH4(+). The catalysed reaction is D-glutamate + O2 + H2O = H2O2 + 2-oxoglutarate + NH4(+). Inhibited by aminooxyacetic acid, malonate, meso-tartrate and potassium bromide. Functionally, selectively catalyzes the oxidative deamination of acidic amino acids. Suppresses the level of D-aspartate in the brain, an amino acid that can act as an agonist for glutamate receptors. Protects the organism from the toxicity of D-amino acids. May also function in the intestine. The sequence is that of D-aspartate oxidase from Rattus norvegicus (Rat).